Here is a 491-residue protein sequence, read N- to C-terminus: Lysine--tRNA ligase 1 (491 aa).

The Mg(2+) site is built by Glu400 and Glu407.

This sequence belongs to the class-II aminoacyl-tRNA synthetase family. In terms of assembly, homodimer. Mg(2+) is required as a cofactor.

Its subcellular location is the cytoplasm. It carries out the reaction tRNA(Lys) + L-lysine + ATP = L-lysyl-tRNA(Lys) + AMP + diphosphate. The chain is Lysine--tRNA ligase 1 from Mycoplasmopsis pulmonis (strain UAB CTIP) (Mycoplasma pulmonis).